A 574-amino-acid polypeptide reads, in one-letter code: Fusion glycoprotein F0 (574 aa).

A signal peptide spans 1–25 (MELLIHRLSAIFLTLAINALYLTSS). Over 26–524 (QNITEEFYQS…NVNTGKSTTN (499 aa)) the chain is Extracellular. 2 N-linked (GlcNAc...) asparagine; by host glycosylation sites follow: Asn27 and Asn70. 7 disulfide bridges follow: Cys37-Cys439, Cys69-Cys212, Cys313-Cys343, Cys322-Cys333, Cys358-Cys367, Cys382-Cys393, and Cys416-Cys422. Residues 76–96 (VKLIKQELDKYKNAVTELQLL) are a coiled coil. N-linked (GlcNAc...) asparagine; by host glycans are attached at residues Asn116, Asn120, and Asn126. A fusion peptide region spans residues 137-157 (FLGFLLGVGSAIASGIAVSKV). The stretch at 158–209 (LHLEGEVNKIKNALLSTNKAVVSLSNGVSVLTSKVLDLKNYINNQLLPIVNQ) forms a coiled coil. Positions 481–516 (LVFPSDEFDASISQVNEKINQSLAFIRRSDELLHNV) form a coiled coil. Residue Asn500 is glycosylated (N-linked (GlcNAc...) asparagine; by host). The chain crosses the membrane as a helical span at residues 525–550 (IMITTIIIVIIVVLLSLIAIGLLLYC). Residue Cys550 is the site of S-palmitoyl cysteine; by host attachment. At 551–574 (KAKNTPVTLSKDQLSGINNIAFSK) the chain is on the cytoplasmic side.

It belongs to the paramyxoviruses fusion glycoprotein family. In terms of assembly, homotrimer. Heterodimer with fusion protein F2; disulfide-linked. Interacts with host NCL; this interaction plays a role in viral entry into the host cell. As a heterodimer with F2, interacts with host heparan sulfate. As a heterodimer with F2, interacts with host IGF1R; this interaction activates PRKCZ/PKCzeta that recruits NCL/nucleolin from the host nucleus to the plasma membrane. Part of a complex composed of F1, F2 and G glycoproteins. As a heterodimer with F2, interacts with host RHOA; this interaction facilitates virus-induced syncytium formation. As to quaternary structure, homotrimer. Heterodimer with fusion protein F1; disulfide-linked. As a heterodimer with F1, interacts with host heparan sulfate. As a heterodimer with F1, interacts with host IGF1R; this interaction activates PRKCZ/PKCzeta that recruits NCL/nucleolin from the host nucleus to the plasma membrane. Part of a complex composed of F1, F2 and G glycoproteins. As a heterodimer with F1, interacts with host RHOA; this interaction facilitates virus-induced syncytium formation. Post-translationally, the F glycoprotein is synthesized as a F0 inactive precursor that is heavily N-glycosylated and processed at two sites by a host furin-like protease probably in the Golgi. The cleavage site between p27 and F1 may occur after endocytosis to yield the mature F1 and F2 proteins. Both cleavages are required for membrane fusion and p27 is released from the processed protein.

Its subcellular location is the host Golgi apparatus membrane. The protein resides in the virion membrane. The protein localises to the host cell membrane. Functionally, inactive precursor that is cleaved at two sites by a furin-like protease to give rise to the mature F1 and F2 fusion glycoproteins. Class I viral fusion protein. Under the current model, the protein has at least 3 conformational states: pre-fusion native state, pre-hairpin intermediate state, and post-fusion hairpin state. During viral and plasma cell membrane fusion, the coiled coil regions assume a trimer-of-hairpins structure, positioning the fusion peptide in close proximity to the C-terminal region of the ectodomain. The formation of this structure appears to drive apposition and subsequent fusion of viral and cellular membranes leading to delivery of the nucleocapsid into the cytoplasm. This fusion is pH independent and occurs at the plasma or endosomal membrane. The trimer of F1-F2 (F protein) also facilitates the attachment to host cell by binding to host heparan sulfate. F protein is involved in the entry into the host cell through the interaction with host IGF1R. This interaction activates PRKCZ/PKCzeta that recruits host NCL/nucleolin to the apical cell surface where it can bind fusion glycoprotein F1. Later in infection, F protein expressed at the plasma membrane of infected cells can mediate fusion with adjacent cells to form syncytia, a cytopathic effect that could lead to tissue necrosis. F protein may trigger p53-dependent apoptosis. In terms of biological role, major determinant of the species specificity of RSV infection. The trimer of F1-F2 (F protein) also facilitates the attachment to host cell by binding to host heparan sulfate. F protein is involved in the entry into the host cell through the interaction with host IGF1R. This interaction activates PRKCZ/PKCzeta that recruits host NCL/nucleolin to the apical cell surface where it can bind fusion glycoprotein F1. Later in infection, F protein expressed at the plasma membrane of infected cells can mediate fusion with adjacent cells to form syncytia, a cytopathic effect that could lead to tissue necrosis. F protein seems to trigger p53-dependent apoptosis. The polypeptide is Fusion glycoprotein F0 (F) (Human respiratory syncytial virus B (strain B1)).